Reading from the N-terminus, the 310-residue chain is Oxygen-dependent coproporphyrinogen-III oxidase (310 aa).

Ser-92 provides a ligand contact to substrate. The a divalent metal cation site is built by His-96 and His-106. Catalysis depends on His-106, which acts as the Proton donor. Residue 108 to 110 (NVR) participates in substrate binding. The a divalent metal cation site is built by His-145 and His-175. Positions 240-275 (YVEFNLIWDRGTLFGLQSGGRTESILMSMPPLARWE) are important for dimerization. 258–260 (GGR) contributes to the substrate binding site.

This sequence belongs to the aerobic coproporphyrinogen-III oxidase family. In terms of assembly, homodimer. A divalent metal cation is required as a cofactor.

Its subcellular location is the cytoplasm. It catalyses the reaction coproporphyrinogen III + O2 + 2 H(+) = protoporphyrinogen IX + 2 CO2 + 2 H2O. Its pathway is porphyrin-containing compound metabolism; protoporphyrin-IX biosynthesis; protoporphyrinogen-IX from coproporphyrinogen-III (O2 route): step 1/1. Functionally, involved in the heme biosynthesis. Catalyzes the aerobic oxidative decarboxylation of propionate groups of rings A and B of coproporphyrinogen-III to yield the vinyl groups in protoporphyrinogen-IX. The polypeptide is Oxygen-dependent coproporphyrinogen-III oxidase (Pectobacterium carotovorum subsp. carotovorum (strain PC1)).